Here is a 306-residue protein sequence, read N- to C-terminus: Protein SULFUR DEFICIENCY-INDUCED 1 (306 aa).

TPR repeat units follow at residues 1 to 22 (MERS…NLMK), 71 to 104 (DSAL…CSKN), 107 to 140 (DSLD…IYQG), 167 to 200 (SRLL…EPDA), and 202 to 233 (KSCN…RVLG). Positions 72-139 (SALKDMAVVM…LKRKLRQIYQ (68 aa)) form a coiled coil. A coiled-coil region spans residues 238-260 (RTRQRAEELLSELESSLPRMRDA). A TPR 6 repeat occupies 270–304 (LDDDFVLGLEEMTSTSFKSKRLPIFEQISSFRNTL).

This sequence belongs to the MS5 protein family.

Its subcellular location is the nucleus. Its function is as follows. Involved in the utilization of stored sulfate under sulfur-deficient conditions. The sequence is that of Protein SULFUR DEFICIENCY-INDUCED 1 from Arabidopsis thaliana (Mouse-ear cress).